A 379-amino-acid chain; its full sequence is Cytochrome b (379 aa).

Helical transmembrane passes span Phe-33–Met-53, Trp-77–Ile-98, Trp-113–Leu-133, and Phe-178–Ile-198. Heme b-binding residues include His-83 and His-97. The heme b site is built by His-182 and His-196. His-201 serves as a coordination point for a ubiquinone. A run of 4 helical transmembrane segments spans residues Tyr-226 to Ser-246, Leu-288 to His-308, Phe-320 to Gly-340, and Phe-347 to Pro-367.

Belongs to the cytochrome b family. As to quaternary structure, the cytochrome bc1 complex contains 3 respiratory subunits (MT-CYB, CYC1 and UQCRFS1), 2 core proteins (UQCRC1 and UQCRC2) and probably 6 low-molecular weight proteins. Heme b serves as cofactor.

It localises to the mitochondrion inner membrane. In terms of biological role, component of the ubiquinol-cytochrome c reductase complex (complex III or cytochrome b-c1 complex) that is part of the mitochondrial respiratory chain. The b-c1 complex mediates electron transfer from ubiquinol to cytochrome c. Contributes to the generation of a proton gradient across the mitochondrial membrane that is then used for ATP synthesis. This Poeciliopsis occidentalis (Gila topminnow) protein is Cytochrome b (mt-cyb).